Reading from the N-terminus, the 497-residue chain is Catalase-2 (497 aa).

Active-site residues include His-71 and Asn-144. Tyr-354 is a binding site for heme.

It belongs to the catalase family. Heme is required as a cofactor.

The catalysed reaction is 2 H2O2 = O2 + 2 H2O. Functionally, catalase involved in the oxidative stress response serving to protect cells from toxicity. For instance plays a role in defending against oxidative damage induced by excessive copper stress. Not required for maintaining normal lifespan. This Caenorhabditis elegans protein is Catalase-2.